Here is a 211-residue protein sequence, read N- to C-terminus: Pyridoxine/pyridoxamine 5'-phosphate oxidase (211 aa).

Substrate-binding positions include 7-10 (RREY) and K65. FMN is bound by residues 60-65 (RIVLLK), 75-76 (YT), R81, K82, and Q104. Residues Y122, R126, and S130 each coordinate substrate. FMN is bound by residues 139–140 (QS) and W184. Position 190–192 (190–192 (RLH)) interacts with substrate. R194 provides a ligand contact to FMN.

The protein belongs to the pyridoxamine 5'-phosphate oxidase family. Homodimer. Requires FMN as cofactor.

The catalysed reaction is pyridoxamine 5'-phosphate + O2 + H2O = pyridoxal 5'-phosphate + H2O2 + NH4(+). It catalyses the reaction pyridoxine 5'-phosphate + O2 = pyridoxal 5'-phosphate + H2O2. The protein operates within cofactor metabolism; pyridoxal 5'-phosphate salvage; pyridoxal 5'-phosphate from pyridoxamine 5'-phosphate: step 1/1. It participates in cofactor metabolism; pyridoxal 5'-phosphate salvage; pyridoxal 5'-phosphate from pyridoxine 5'-phosphate: step 1/1. Functionally, catalyzes the oxidation of either pyridoxine 5'-phosphate (PNP) or pyridoxamine 5'-phosphate (PMP) into pyridoxal 5'-phosphate (PLP). The polypeptide is Pyridoxine/pyridoxamine 5'-phosphate oxidase (Vibrio atlanticus (strain LGP32) (Vibrio splendidus (strain Mel32))).